The primary structure comprises 134 residues: Thioredoxin-like protein Clot (134 aa).

Residues 1–134 (MTLKKVDANP…LILPLLAPST (134 aa)) form the Thioredoxin domain. Residues Cys-48 and Cys-51 each act as nucleophile in the active site. Cysteines 48 and 51 form a disulfide.

This sequence belongs to the thioredoxin family.

In terms of biological role, probable thiol-disulfide oxidoreductase that may participate in various redox reactions. The sequence is that of Thioredoxin-like protein Clot from Arabidopsis thaliana (Mouse-ear cress).